The chain runs to 190 residues: UPF0301 protein Rmet_2743 (190 aa).

The protein belongs to the UPF0301 (AlgH) family.

In Cupriavidus metallidurans (strain ATCC 43123 / DSM 2839 / NBRC 102507 / CH34) (Ralstonia metallidurans), this protein is UPF0301 protein Rmet_2743.